Consider the following 461-residue polypeptide: Photosystem II CP43 reaction center protein (461 aa).

Residues 1–48 (MVTLSSNSIFATNRDQESSGFAWWAGNARLINLSGKLLGAHVAHAGLI) lie on the Cytoplasmic side of the membrane. Residues 49–71 (VFWAGAMTLFELAHFIPEKPMYE) traverse the membrane as a helical segment. Topologically, residues 72–111 (QGLILIPHIATLGWGVGPGGEVVDTFPFFVVGVVHLISSA) are lumenal. The helical transmembrane segment at 112 to 133 (VLGFGGVYHAIRGPETLEEYSS) threads the bilayer. Over 134–155 (FFGYDWKDKNKMTTILGFHLIV) the chain is Cytoplasmic. Residues 156 to 178 (LGIGALLLVAKAMFFGGLYDTWA) form a helical membrane-spanning segment. Over 179–232 (PGGGDVRVITNPTLDPRVIFGYLLKSPFGGEGWIVSVNNLEDVVGGHIWIGLIC) the chain is Lumenal. The helical transmembrane segment at 233 to 253 (IAGGIWHILTTPFGWARRAFI) threads the bilayer. The Cytoplasmic segment spans residues 254 to 268 (WSGEAYLSYSLGALS). The helical transmembrane segment at 269 to 289 (MMGFIATCFVWFNNTVYPSEF) threads the bilayer. At 290-424 (YGPTGPEASQ…ATSHFVLAFF (135 aa)) the chain is on the lumenal side. Glu-355 lines the [CaMn4O5] cluster pocket. The chain crosses the membrane as a helical span at residues 425–449 (FLVGHLWHAGRARAAAAGFEKGIDR). The Cytoplasmic portion of the chain corresponds to 450–461 (ESEPVLSMPSLD).

In terms of assembly, PSII is composed of 1 copy each of membrane proteins PsbA, PsbB, PsbC, PsbD, PsbE, PsbF, PsbH, PsbI, PsbJ, PsbK, PsbL, PsbM, PsbT, PsbX, PsbY, PsbZ, Psb30/Ycf12, peripheral proteins PsbO, CyanoQ (PsbQ), PsbU, PsbV and a large number of cofactors. It forms dimeric complexes. Part of a photosystem II (PSII) assembly intermediate complex PSII-I; crystallized from a strain deleted of psbJ, it forms monomeric PSII before addition of the oxygen evolving complex. PSII-I includes 3 assembly factors not found in mature PSII (Psb27, Psb28 and Psb34), and CP43 (this protein) is not in its mature conformation. The cofactor is Binds multiple chlorophylls and provides some of the ligands for the Ca-4Mn-5O cluster of the oxygen-evolving complex. It may also provide a ligand for a Cl- that is required for oxygen evolution. PSII binds additional chlorophylls, carotenoids and specific lipids..

It localises to the cellular thylakoid membrane. Functionally, one of the components of the core complex of photosystem II (PSII). It binds chlorophyll and helps catalyze the primary light-induced photochemical processes of PSII. PSII is a light-driven water:plastoquinone oxidoreductase, using light energy to abstract electrons from H(2)O, generating O(2) and a proton gradient subsequently used for ATP formation. This Thermosynechococcus vestitus (strain NIES-2133 / IAM M-273 / BP-1) protein is Photosystem II CP43 reaction center protein.